The following is a 416-amino-acid chain: Serine/threonine transporter SstT (416 aa).

A run of 9 helical transmembrane segments spans residues 15–35 (SLVS…MFMP), 49–69 (VGAL…AAII), 82–102 (ILLL…VASF), 141–161 (ALMD…GIAM), 192–212 (LGIL…ALFG), 217–237 (LVVL…IIVF), 288–308 (VSIP…ITVL), 330–350 (VVAT…LLLI), and 356–376 (LFGI…IIGV).

This sequence belongs to the dicarboxylate/amino acid:cation symporter (DAACS) (TC 2.A.23) family.

It localises to the cell inner membrane. The enzyme catalyses L-serine(in) + Na(+)(in) = L-serine(out) + Na(+)(out). It carries out the reaction L-threonine(in) + Na(+)(in) = L-threonine(out) + Na(+)(out). Involved in the import of serine and threonine into the cell, with the concomitant import of sodium (symport system). This chain is Serine/threonine transporter SstT, found in Aeromonas salmonicida (strain A449).